The following is a 359-amino-acid chain: Aromatic amino acid aminotransferase (359 aa).

Residue Lys-223 is modified to N6-(pyridoxal phosphate)lysine.

Belongs to the class-II pyridoxal-phosphate-dependent aminotransferase family. As to quaternary structure, homodimer. It depends on pyridoxal 5'-phosphate as a cofactor.

The catalysed reaction is an aromatic L-alpha-amino acid + 2-oxoglutarate = an aromatic oxo-acid + L-glutamate. Its function is as follows. Aminotransferase that catalyzes the conversion of aromatic amino acids and 2-oxoglutarate into corresponding aromatic oxo acids and L-glutamate. The chain is Aromatic amino acid aminotransferase from Streptomyces avermitilis (strain ATCC 31267 / DSM 46492 / JCM 5070 / NBRC 14893 / NCIMB 12804 / NRRL 8165 / MA-4680).